We begin with the raw amino-acid sequence, 244 residues long: Small ribosomal subunit protein eS4 (244 aa).

The S4 RNA-binding domain occupies 43–108; it reads LPLLLIVRDI…NYRVLFDRKG (66 aa).

It belongs to the eukaryotic ribosomal protein eS4 family.

This chain is Small ribosomal subunit protein eS4 (rps4e), found in Methanocaldococcus jannaschii (strain ATCC 43067 / DSM 2661 / JAL-1 / JCM 10045 / NBRC 100440) (Methanococcus jannaschii).